The sequence spans 65 residues: Large ribosomal subunit protein bL35 (65 aa).

This sequence belongs to the bacterial ribosomal protein bL35 family.

This chain is Large ribosomal subunit protein bL35, found in Burkholderia ambifaria (strain MC40-6).